The sequence spans 288 residues: UDP-3-O-acyl-N-acetylglucosamine deacetylase (288 aa).

Zn(2+) is bound by residues histidine 79, histidine 236, and aspartate 240. The active-site Proton donor is histidine 263.

The protein belongs to the LpxC family. It depends on Zn(2+) as a cofactor.

It catalyses the reaction a UDP-3-O-[(3R)-3-hydroxyacyl]-N-acetyl-alpha-D-glucosamine + H2O = a UDP-3-O-[(3R)-3-hydroxyacyl]-alpha-D-glucosamine + acetate. It participates in glycolipid biosynthesis; lipid IV(A) biosynthesis; lipid IV(A) from (3R)-3-hydroxytetradecanoyl-[acyl-carrier-protein] and UDP-N-acetyl-alpha-D-glucosamine: step 2/6. Functionally, catalyzes the hydrolysis of UDP-3-O-myristoyl-N-acetylglucosamine to form UDP-3-O-myristoylglucosamine and acetate, the committed step in lipid A biosynthesis. The sequence is that of UDP-3-O-acyl-N-acetylglucosamine deacetylase from Rickettsia felis (strain ATCC VR-1525 / URRWXCal2) (Rickettsia azadi).